The chain runs to 189 residues: Class A basic helix-loop-helix protein 15 (189 aa).

A compositionally biased stretch (basic residues) spans 1–12 (MKTKNRPPRRRA). 2 disordered regions span residues 1 to 85 (MKTK…ERER) and 167 to 189 (TEAQ…REGT). Phosphothreonine is present on threonine 25. Residues 68-85 (GRRDSSIQRRLESNERER) show a composition bias toward basic and acidic residues. Residues 75–127 (QRRLESNERERQRMHKLNNAFQALREVIPHVRADKKLSKIETLTLAKNYIKSL) form the bHLH domain.

In terms of assembly, forms homodimers or heterodimers with TCF3 gene products E12 and E47. These dimers bind to the E-box site, however, heterodimer with MYOD1 does not bind target DNA. In terms of tissue distribution, expressed in brain, liver, spleen and skeletal muscle.

The protein localises to the nucleus. Functionally, plays a role in controlling the transcriptional activity of MYOD1, ensuring that expanding myoblast populations remain undifferentiated. Repression may occur through muscle-specific E-box occupancy by homodimers. May also negatively regulate bHLH-mediated transcription through an N-terminal repressor domain. Serves as a key regulator of acinar cell function, stability, and identity. Also required for normal organelle localization in exocrine cells and for mitochondrial calcium ion transport. May function as a unique regulator of gene expression in several different embryonic and postnatal cell lineages. Binds to the E-box consensus sequence 5'-CANNTG-3'. This is Class A basic helix-loop-helix protein 15 (BHLHA15) from Homo sapiens (Human).